A 71-amino-acid polypeptide reads, in one-letter code: Putative antitoxin VapB15 (71 aa).

This sequence belongs to the UPF0330 family.

In terms of biological role, possibly the antitoxin component of a type II toxin-antitoxin (TA) system. Its cognate toxin is VapC15 (Potential). The chain is Putative antitoxin VapB15 (vapB15) from Archaeoglobus fulgidus (strain ATCC 49558 / DSM 4304 / JCM 9628 / NBRC 100126 / VC-16).